A 93-amino-acid polypeptide reads, in one-letter code: YcgL domain-containing protein VV1_0131 (93 aa).

In terms of domain architecture, YcgL spans 1–84 (MLCSIYKSSK…PPENLLQQHK (84 aa)). A disordered region spans residues 72–93 (LPPPPENLLQQHKERKAQQKND).

The polypeptide is YcgL domain-containing protein VV1_0131 (Vibrio vulnificus (strain CMCP6)).